We begin with the raw amino-acid sequence, 210 residues long: Floral homeotic protein FBP1 (210 aa).

An MADS-box domain is found at 3-57 (RGKIEIKRIENSSNRQVTYSKRRNGILKKAKEISVLCDARVSVIIFASSGKMHEF). Residues 82–173 (HENLDNEINK…QLEIATMNRN (92 aa)) enclose the K-box domain.

As to expression, petals.

It localises to the nucleus. Probable transcription factor. This is Floral homeotic protein FBP1 (FBP1) from Petunia hybrida (Petunia).